Here is a 597-residue protein sequence, read N- to C-terminus: Fructan 1-exohydrolase w1 (597 aa).

A signal peptide spans 1 to 20 (MAQAWAFLLPVLVFGSYVTS). Asp-76 is a catalytic residue. Residues Asn-169, Asn-237, and Asn-249 are each glycosylated (N-linked (GlcNAc...) asparagine). A disulfide bridge connects residues Cys-447 and Cys-493. Asn-568 is a glycosylation site (N-linked (GlcNAc...) asparagine).

This sequence belongs to the glycosyl hydrolase 32 family.

It carries out the reaction Hydrolysis of terminal, non-reducing (2-&gt;1)-linked beta-D-fructofuranose residues in fructans.. Its activity is regulated as follows. Inhibited by sucrose. In terms of biological role, hydrolyzes inulin-type beta-(2,1)-fructans and beta-(2,1)-linkages in branched fructans. Has low activity against beta-(2,6)-linked fructans. May play a role as a beta-(2,1)-trimmer during graminan biosynthesis. The polypeptide is Fructan 1-exohydrolase w1 (Triticum aestivum (Wheat)).